Consider the following 600-residue polypeptide: Aspartate--tRNA(Asp/Asn) ligase (600 aa).

Residue Glu181 participates in L-aspartate binding. The segment at 205–208 (QQYK) is aspartate. Arg227 contributes to the L-aspartate binding site. ATP-binding positions include 227–229 (RDE) and Gln236. An L-aspartate-binding site is contributed by His455. Glu490 is a binding site for ATP. An L-aspartate-binding site is contributed by Arg497. 542–545 (GLDR) contacts ATP.

It belongs to the class-II aminoacyl-tRNA synthetase family. Type 1 subfamily. As to quaternary structure, homodimer.

The protein localises to the cytoplasm. It carries out the reaction tRNA(Asx) + L-aspartate + ATP = L-aspartyl-tRNA(Asx) + AMP + diphosphate. Functionally, aspartyl-tRNA synthetase with relaxed tRNA specificity since it is able to aspartylate not only its cognate tRNA(Asp) but also tRNA(Asn). Reaction proceeds in two steps: L-aspartate is first activated by ATP to form Asp-AMP and then transferred to the acceptor end of tRNA(Asp/Asn). This is Aspartate--tRNA(Asp/Asn) ligase from Methylacidiphilum infernorum (isolate V4) (Methylokorus infernorum (strain V4)).